The primary structure comprises 434 residues: Enolase (434 aa).

(2R)-2-phosphoglycerate is bound at residue Gln167. Catalysis depends on Glu209, which acts as the Proton donor. Mg(2+) contacts are provided by Asp246, Glu291, and Asp318. The (2R)-2-phosphoglycerate site is built by Lys343, Arg372, Ser373, and Lys394. The active-site Proton acceptor is the Lys343.

It belongs to the enolase family. As to quaternary structure, component of the RNA degradosome, a multiprotein complex involved in RNA processing and mRNA degradation. Mg(2+) is required as a cofactor.

The protein resides in the cytoplasm. Its subcellular location is the secreted. It localises to the cell surface. It carries out the reaction (2R)-2-phosphoglycerate = phosphoenolpyruvate + H2O. It functions in the pathway carbohydrate degradation; glycolysis; pyruvate from D-glyceraldehyde 3-phosphate: step 4/5. Catalyzes the reversible conversion of 2-phosphoglycerate (2-PG) into phosphoenolpyruvate (PEP). It is essential for the degradation of carbohydrates via glycolysis. This chain is Enolase, found in Buchnera aphidicola subsp. Acyrthosiphon pisum (strain 5A).